The sequence spans 122 residues: Large ribosomal subunit protein uL14 (122 aa).

The protein belongs to the universal ribosomal protein uL14 family. In terms of assembly, part of the 50S ribosomal subunit. Forms a cluster with proteins L3 and L19. In the 70S ribosome, L14 and L19 interact and together make contacts with the 16S rRNA in bridges B5 and B8.

Its function is as follows. Binds to 23S rRNA. Forms part of two intersubunit bridges in the 70S ribosome. This chain is Large ribosomal subunit protein uL14, found in Mesorhizobium japonicum (strain LMG 29417 / CECT 9101 / MAFF 303099) (Mesorhizobium loti (strain MAFF 303099)).